We begin with the raw amino-acid sequence, 668 residues long: Protein-glutamine gamma-glutamyltransferase (668 aa).

Residues M1–R6 are Cytoplasmic-facing. A helical transmembrane segment spans residues V7–M27. Residues P28–A50 lie on the Periplasmic side of the membrane. A helical transmembrane segment spans residues G51–L71. The Cytoplasmic segment spans residues S72–G74. Residues S75–V95 traverse the membrane as a helical segment. Residues E96–A103 are Periplasmic-facing. 2 consecutive transmembrane segments (helical) span residues L104–F124 and L125–Q145. Residues Q146–R158 are Cytoplasmic-facing. A helical transmembrane segment spans residues L159–P179. Over R180–G548 the chain is Periplasmic. The active-site Nucleophile is C404. Residues H448 and D464 contribute to the active site. A helical membrane pass occupies residues L549–P569. Residues W570–A668 lie on the Cytoplasmic side of the membrane.

This sequence belongs to the transglutaminase-like superfamily.

It localises to the cell inner membrane. The catalysed reaction is L-glutaminyl-[protein] + L-lysyl-[protein] = [protein]-L-lysyl-N(6)-5-L-glutamyl-[protein] + NH4(+). Displays transglutaminase activity (TGase) in vitro. Plays a critical role in the viability of P.aeruginosa. Might contribute to an essential function linked to the cell wall. This chain is Protein-glutamine gamma-glutamyltransferase (tgpA), found in Pseudomonas aeruginosa (strain ATCC 15692 / DSM 22644 / CIP 104116 / JCM 14847 / LMG 12228 / 1C / PRS 101 / PAO1).